The primary structure comprises 336 residues: uncharacterized protein (336 aa).

It belongs to the GppA/Ppx family.

This is an uncharacterized protein from Streptomyces coelicolor (strain ATCC BAA-471 / A3(2) / M145).